A 291-amino-acid polypeptide reads, in one-letter code: Malectin (291 aa).

The first 30 residues, 1-30 (MLRPRGAEGTAVALLRLLLLLLLLGPKLRG), serve as a signal peptide directing secretion. The Lumenal portion of the chain corresponds to 31 to 268 (PGLGVVGAAG…TPNPYASDNS (238 aa)). Residues Y81, Y103, Y130, F131, and D200 each contribute to the a carbohydrate site. The tract at residues 220-264 (LQPHPGLEKKEEEEEEEEYDEGSNLKRQTNKNRVQSGPRTPNPYA) is disordered. The segment covering 230 to 240 (EEEEEEEEYDE) has biased composition (acidic residues). A compositionally biased stretch (polar residues) spans 244-264 (LKRQTNKNRVQSGPRTPNPYA). N267 carries N-linked (GlcNAc...) asparagine glycosylation. A helical membrane pass occupies residues 269–289 (SLMFPILVAFGVFIPTLFCLC). The Cytoplasmic segment spans residues 290–291 (RL).

The protein belongs to the malectin family. Interacts with the oligosaccharyltransferase (OST) complex.

The protein resides in the endoplasmic reticulum membrane. Functionally, carbohydrate-binding protein with a strong ligand preference for Glc2-N-glycan. May play a role in the early steps of protein N-glycosylation. This chain is Malectin, found in Mus musculus (Mouse).